A 205-amino-acid chain; its full sequence is Photosystem I assembly protein Ycf4 (205 aa).

A run of 2 helical transmembrane segments spans residues 23-43 (WATVILIGSFGFLLTGISSYI) and 86-106 (LMCFYGSLGFLLSIYWWCLIF).

This sequence belongs to the Ycf4 family.

It localises to the plastid. The protein resides in the chloroplast thylakoid membrane. Functionally, seems to be required for the assembly of the photosystem I complex. This chain is Photosystem I assembly protein Ycf4, found in Tetradesmus obliquus (Green alga).